The sequence spans 201 residues: Imidazole glycerol phosphate synthase subunit HisH (201 aa).

The 201-residue stretch at 1–201 (MVFIADYGAG…LKVLANFAEL (201 aa)) folds into the Glutamine amidotransferase type-1 domain. Cys79 (nucleophile) is an active-site residue. Residues His183 and Glu185 contribute to the active site.

Heterodimer of HisH and HisF.

It is found in the cytoplasm. It carries out the reaction 5-[(5-phospho-1-deoxy-D-ribulos-1-ylimino)methylamino]-1-(5-phospho-beta-D-ribosyl)imidazole-4-carboxamide + L-glutamine = D-erythro-1-(imidazol-4-yl)glycerol 3-phosphate + 5-amino-1-(5-phospho-beta-D-ribosyl)imidazole-4-carboxamide + L-glutamate + H(+). It catalyses the reaction L-glutamine + H2O = L-glutamate + NH4(+). Its pathway is amino-acid biosynthesis; L-histidine biosynthesis; L-histidine from 5-phospho-alpha-D-ribose 1-diphosphate: step 5/9. IGPS catalyzes the conversion of PRFAR and glutamine to IGP, AICAR and glutamate. The HisH subunit catalyzes the hydrolysis of glutamine to glutamate and ammonia as part of the synthesis of IGP and AICAR. The resulting ammonia molecule is channeled to the active site of HisF. In Chlorobium chlorochromatii (strain CaD3), this protein is Imidazole glycerol phosphate synthase subunit HisH.